A 164-amino-acid chain; its full sequence is FMN reductase (NADH) RutF (164 aa).

This sequence belongs to the non-flavoprotein flavin reductase family. RutF subfamily.

It carries out the reaction FMNH2 + NAD(+) = FMN + NADH + 2 H(+). Its function is as follows. Catalyzes the reduction of FMN to FMNH2 which is used to reduce pyrimidine by RutA via the Rut pathway. The protein is FMN reductase (NADH) RutF of Escherichia coli O150:H5 (strain SE15).